Here is a 179-residue protein sequence, read N- to C-terminus: Large ribosomal subunit protein uL5 (179 aa).

This sequence belongs to the universal ribosomal protein uL5 family. In terms of assembly, part of the 50S ribosomal subunit; part of the 5S rRNA/L5/L18/L25 subcomplex. Contacts the 5S rRNA and the P site tRNA. Forms a bridge to the 30S subunit in the 70S ribosome.

Functionally, this is one of the proteins that bind and probably mediate the attachment of the 5S RNA into the large ribosomal subunit, where it forms part of the central protuberance. In the 70S ribosome it contacts protein S13 of the 30S subunit (bridge B1b), connecting the 2 subunits; this bridge is implicated in subunit movement. Contacts the P site tRNA; the 5S rRNA and some of its associated proteins might help stabilize positioning of ribosome-bound tRNAs. The protein is Large ribosomal subunit protein uL5 of Buchnera aphidicola subsp. Baizongia pistaciae (strain Bp).